The sequence spans 327 residues: Pumilio homolog 18 (327 aa).

A PUM-HD domain is found at 1–324 (MAVADNPFSM…NIANILDSFR (324 aa)). Pumilio repeat units lie at residues 79–114 (SDSD…FCAA), 115–149 (ILRR…ALYE), 150–185 (RILY…DQLL), 186–222 (ELVA…NIAV), 223–260 (NLYG…ELLG), and 261–295 (CDGD…DLFW).

Its subcellular location is the cytoplasm. Its function is as follows. Sequence-specific RNA-binding protein that regulates translation and mRNA stability by binding the 3'-UTR of target mRNAs. This is Pumilio homolog 18 (APUM18) from Arabidopsis thaliana (Mouse-ear cress).